A 142-amino-acid polypeptide reads, in one-letter code: Large ribosomal subunit protein uL13 (142 aa).

Belongs to the universal ribosomal protein uL13 family. As to quaternary structure, part of the 50S ribosomal subunit.

In terms of biological role, this protein is one of the early assembly proteins of the 50S ribosomal subunit, although it is not seen to bind rRNA by itself. It is important during the early stages of 50S assembly. This chain is Large ribosomal subunit protein uL13, found in Caldicellulosiruptor bescii (strain ATCC BAA-1888 / DSM 6725 / KCTC 15123 / Z-1320) (Anaerocellum thermophilum).